A 220-amino-acid chain; its full sequence is MELYLDTANVAEVERLARIFPIAGVTTNPSIVAASKESIWDVLPRLQNAIGEEGTLFAQTMSRDAKGMVEEAKRLNNAIPGIVVKIPVTAEGLAAIKLLKKEGIVTLGTAVYSASQGLLAALAGAKYVAPYVNRVDAQGGDGIRMVLELQTLLEHHAPDSMVLAASFKTPRQALDCLLAGCQAITLPLDVAQQMLNTPAVESAIEKFEQDWKNAFGNLNL.

Residue K85 is the Schiff-base intermediate with substrate of the active site.

The protein belongs to the transaldolase family. Type 3A subfamily. Homodecamer.

It is found in the cytoplasm. The catalysed reaction is beta-D-fructose 6-phosphate = dihydroxyacetone + D-glyceraldehyde 3-phosphate. Its function is as follows. Catalyzes the reversible formation of fructose 6-phosphate from dihydroxyacetone and D-glyceraldehyde 3-phosphate via an aldolization reaction. The sequence is that of Fructose-6-phosphate aldolase from Salmonella typhi.